The chain runs to 213 residues: MKAYQREFIEFALEKQVLKFGEFTLKSGRKSPYFFNAGLFNTGRDLARLGRFYAAALVDSGIEFDVLFGPAYKGIPIATTTAVALADHHDVDTPYCFNRKEAKNHGEGGNLVGSKLEGRVMLVDDVITAGTAIRESMELIQANKADLAGVLVAIDRQEKGKGELSAIQEVERDFGCAVISIVSLTDLITYLEQQGNNTEHLEAVKAYRAQYGI.

Lys26 is a binding site for 5-phospho-alpha-D-ribose 1-diphosphate. An orotate-binding site is contributed by 34 to 35; it reads FF. 5-phospho-alpha-D-ribose 1-diphosphate contacts are provided by residues 72–73, Arg99, Lys100, Lys103, His105, and 124–132; these read YK and DDVITAGTA. Residues Thr128 and Arg156 each contribute to the orotate site.

The protein belongs to the purine/pyrimidine phosphoribosyltransferase family. PyrE subfamily. As to quaternary structure, homodimer. Mg(2+) serves as cofactor.

The enzyme catalyses orotidine 5'-phosphate + diphosphate = orotate + 5-phospho-alpha-D-ribose 1-diphosphate. It participates in pyrimidine metabolism; UMP biosynthesis via de novo pathway; UMP from orotate: step 1/2. Functionally, catalyzes the transfer of a ribosyl phosphate group from 5-phosphoribose 1-diphosphate to orotate, leading to the formation of orotidine monophosphate (OMP). The protein is Orotate phosphoribosyltransferase of Vibrio cholerae serotype O1 (strain ATCC 39315 / El Tor Inaba N16961).